Here is a 106-residue protein sequence, read N- to C-terminus: Probable glutaredoxin (106 aa).

Residues 8–106 form the Glutaredoxin domain; sequence IVQKITGADP…AKYLDVQFTQ (99 aa). A disulfide bridge links Cys-28 with Cys-31.

This sequence belongs to the glutaredoxin family.

It localises to the virion. In Acanthamoeba polyphaga mimivirus (APMV), this protein is Probable glutaredoxin.